The chain runs to 81 residues: Beta-catenin-interacting protein 1 (81 aa).

S59 carries the post-translational modification Phosphoserine.

This sequence belongs to the CTNNBIP1 family. In terms of assembly, binds CTNNB1.

The protein localises to the cytoplasm. It is found in the nucleus. Prevents the interaction between CTNNB1 and TCF family members, and acts as a negative regulator of the Wnt signaling pathway. In Bos taurus (Bovine), this protein is Beta-catenin-interacting protein 1 (CTNNBIP1).